Reading from the N-terminus, the 99-residue chain is DNA-binding protein HmvA (99 aa).

Positions 52–55 (KTIK) are interaction with DNA.

The protein belongs to the archaeal histone HMF family. In terms of assembly, homodimer or heterodimer with another histone. Dimers then assemble into higher oligomers, with the DNA wrapped around the protein core.

Its subcellular location is the cytoplasm. The protein localises to the chromosome. In terms of biological role, binds and compact DNA (95 to 150 base pairs) to form nucleosome-like structures that contain positive DNA supercoils. Increases the resistance of DNA to thermal denaturation (in vitro). In Methanococcus voltae, this protein is DNA-binding protein HmvA (hmvA).